Here is a 695-residue protein sequence, read N- to C-terminus: GRB2-associated-binding protein 1 (695 aa).

An N-acetylserine modification is found at serine 2. Residues 5-116 (EVVCSGWLRK…WVRCICDICG (112 aa)) enclose the PH domain. The segment at 204–229 (AKPTFSETDCNDNVPSHQTPASSQSK) is disordered. Polar residues predominate over residues 206–229 (PTFSETDCNDNVPSHQTPASSQSK). Phosphoserine occurs at positions 251, 253, 266, and 304. Residues 306 to 387 (SYDIPPTPGN…PAGMTPSRSN (82 aa)) form a disordered region. The segment covering 314–334 (GNTYQIPRTFPESTLGQSSKL) has biased composition (polar residues). Threonine 388 is subject to Phosphothreonine. Residues serine 403 and serine 455 each carry the phosphoserine modification. A disordered region spans residues 453–659 (PNSPPRQHSG…GSSMADERVD (207 aa)). Composition is skewed to polar residues over residues 457–466 (PRQHSGSFTE) and 605–617 (FASN…SSPM). Residue tyrosine 628 is modified to Phosphotyrosine. Threonine 639 carries the phosphothreonine modification. Serine 652 is subject to Phosphoserine. At tyrosine 660 the chain carries Phosphotyrosine. The interval 671–695 (LKSTREAWTDGRQSTESETPTKNVK) is disordered. The span at 673-685 (STREAWTDGRQST) shows a compositional bias: basic and acidic residues. Serine 684 carries the post-translational modification Phosphoserine. Polar residues predominate over residues 686–695 (ESETPTKNVK).

It belongs to the GAB family. Identified in a complex containing FRS2, GRB2, GAB1, PIK3R1 and SOS1. Forms a tripartite complex containing GAB1, METTL13 and SPRY2. Within the complex interacts with METTL13. Interacts with GRB2 and with other SH2-containing proteins. Interacts with phosphorylated LAT2. Interacts with PTPRJ. Interacts (phosphorylated) with PTPN11. Interacts with HCK. Phosphorylated on tyrosine residue(s) by the epidermal growth factor receptor (EGFR) and the insulin receptor (INSR). Tyrosine phosphorylation of GAB1 mediates interaction with several proteins that contain SH2 domains. Phosphorylated on tyrosine residues by HCK upon IL6 signaling. Phosphorylated in response to FGFR1 activation. In terms of tissue distribution, expressed in the inner ear (at protein level). Expression is detected in the cochlear duct, spiral limbus region, efferent and afferent nerves, and in spiral ganglion neurons (at protein level).

Functionally, adapter protein that plays a role in intracellular signaling cascades triggered by activated receptor-type kinases. Plays a role in FGFR1 signaling. Probably involved in signaling by the epidermal growth factor receptor (EGFR) and the insulin receptor (INSR). Involved in the MET/HGF-signaling pathway. This chain is GRB2-associated-binding protein 1 (Gab1), found in Mus musculus (Mouse).